Reading from the N-terminus, the 130-residue chain is Holo-[acyl-carrier-protein] synthase (130 aa).

Positions 9 and 58 each coordinate Mg(2+).

It belongs to the P-Pant transferase superfamily. AcpS family. It depends on Mg(2+) as a cofactor.

Its subcellular location is the cytoplasm. It carries out the reaction apo-[ACP] + CoA = holo-[ACP] + adenosine 3',5'-bisphosphate + H(+). Functionally, transfers the 4'-phosphopantetheine moiety from coenzyme A to a Ser of acyl-carrier-protein. The polypeptide is Holo-[acyl-carrier-protein] synthase (Mycolicibacterium paratuberculosis (strain ATCC BAA-968 / K-10) (Mycobacterium paratuberculosis)).